A 448-amino-acid polypeptide reads, in one-letter code: Chromosomal replication initiator protein DnaA (448 aa).

The interval 1–93 is domain I, interacts with DnaA modulators; sequence MEQIVSSLWS…KPTEQNLSAS (93 aa). Residues 94 to 110 form a domain II region; it reads STNKEELTQDTVHKFKT. The domain III, AAA+ region stretch occupies residues 111-328; it reads GLNGRLTFDN…GAINRVSAWC (218 aa). Positions 156, 158, 159, and 160 each coordinate ATP. The tract at residues 329 to 448 is domain IV, binds dsDNA; sequence NFTKRQITID…YTNLTRKLSS (120 aa).

This sequence belongs to the DnaA family. In terms of assembly, oligomerizes as a right-handed, spiral filament on DNA at oriC.

It is found in the cytoplasm. Plays an essential role in the initiation and regulation of chromosomal replication. ATP-DnaA binds to the origin of replication (oriC) to initiate formation of the DNA replication initiation complex once per cell cycle. Binds the DnaA box (a 9 base pair repeat at the origin) and separates the double-stranded (ds)DNA. Forms a right-handed helical filament on oriC DNA; dsDNA binds to the exterior of the filament while single-stranded (ss)DNA is stabiized in the filament's interior. The ATP-DnaA-oriC complex binds and stabilizes one strand of the AT-rich DNA unwinding element (DUE), permitting loading of DNA polymerase. After initiation quickly degrades to an ADP-DnaA complex that is not apt for DNA replication. Binds acidic phospholipids. The chain is Chromosomal replication initiator protein DnaA from Haemophilus ducreyi (strain 35000HP / ATCC 700724).